Reading from the N-terminus, the 722-residue chain is Bifunctional UDP-N-acetylglucosamine 2-epimerase/N-acetylmannosamine kinase (722 aa).

5 residues coordinate UDP: Arg-19, Ser-23, Arg-113, His-220, and Asn-253. CMP-N-acetyl-beta-neuraminate contacts are provided by Lys-259, Glu-271, Lys-280, and His-281. 5 residues coordinate UDP: Val-282, Ser-301, Ser-302, Glu-307, and Arg-321. The tract at residues 406-722 is N-acetylmannosamine kinase; sequence TLSALAVDLG…VLDYTTRRIY (317 aa). Residue Asp-413 coordinates Mg(2+). An N-acyl-D-mannosamine 6-phosphate is bound at residue Gly-416. ADP-binding residues include Thr-417, Asn-418, and Arg-420. Gly-476, Arg-477, Thr-489, Asn-516, Asp-517, and Gly-545 together coordinate an N-acyl-D-mannosamine 6-phosphate. Residues Gly-476, Arg-477, Thr-489, Asn-516, and Asp-517 each contribute to the an N-acyl-D-mannosamine site. Asp-517 is an active-site residue. Glu-566 and His-569 together coordinate an N-acyl-D-mannosamine. Residue His-569 coordinates an N-acyl-D-mannosamine 6-phosphate. Positions 569, 579, 581, and 586 each coordinate Zn(2+). Position 588 (Glu-588) interacts with an N-acyl-D-mannosamine 6-phosphate. An N-acyl-D-mannosamine is bound at residue Glu-588.

In the N-terminal section; belongs to the UDP-N-acetylglucosamine 2-epimerase family. It in the C-terminal section; belongs to the ROK (NagC/XylR) family. Homodimer. Homotetramer. Homohexamer. The hexameric form exhibits both enzyme activities, whereas the dimeric form only catalyzes the phosphorylation of N-acyl-D-mannosamine. In terms of processing, phosphorylated. Phosphorylation by PKC activates the UDP-N-acetylglucosamine 2-epimerase activity. In terms of tissue distribution, highest expression in liver and placenta. Also found in heart, brain, lung, kidney, skeletal muscle and pancreas. Isoform 1 is expressed in heart, brain, kidney, liver, placenta, lung, spleen, pancreas, skeletal muscle and colon. Isoform 2 is expressed mainly in placenta, but also in brain, kidney, liver, lung, pancreas and colon. Isoform 3 is expressed at low level in kidney, liver, placenta and colon.

It is found in the cytoplasm. It localises to the cytosol. It catalyses the reaction UDP-N-acetyl-alpha-D-glucosamine + H2O = aldehydo-N-acetyl-D-mannosamine + UDP + H(+). The enzyme catalyses an N-acyl-D-mannosamine + ATP = an N-acyl-D-mannosamine 6-phosphate + ADP + H(+). The protein operates within amino-sugar metabolism; N-acetylneuraminate biosynthesis. With respect to regulation, the UDP-N-acetylglucosamine 2-epimerase activity, in contrast to the N-acetylmannosamine kinase activity, exhibits allosteric regulation by cytidine monophosphate-N-acetylneuraminic acid (CMP-Neu5Ac), the end product of neuraminic acid biosynthesis. Moreover, the activity is contingent upon the oligomeric state of the enzyme. The monomeric form is inactive, while the dimeric form selectively catalyzes the phosphorylation of N-acetylmannosamine. The hexameric form, on the other hand, demonstrates full proficiency in both enzyme activities. Furthermore, the UDP-N-acetylglucosamine 2-epimerase activity is increased by PKC-mediated phosphorylation. Bifunctional enzyme that possesses both UDP-N-acetylglucosamine 2-epimerase and N-acetylmannosamine kinase activities, and serves as the initiator of the biosynthetic pathway leading to the production of N-acetylneuraminic acid (NeuAc), a critical precursor in the synthesis of sialic acids. By catalyzing this pivotal and rate-limiting step in sialic acid biosynthesis, this enzyme assumes a pivotal role in governing the regulation of cell surface sialylation, playing a role in embryonic angiogenesis. Sialic acids represent a category of negatively charged sugars that reside on the surface of cells as terminal components of glycoconjugates and mediate important functions in various cellular processes, including cell adhesion, signal transduction, and cellular recognition. The protein is Bifunctional UDP-N-acetylglucosamine 2-epimerase/N-acetylmannosamine kinase of Homo sapiens (Human).